Here is a 472-residue protein sequence, read N- to C-terminus: Chromosomal replication initiator protein DnaA (472 aa).

A domain I, interacts with DnaA modulators region spans residues 1–80 (MDTKQIWFTT…YQVNVRVIIS (80 aa)). A domain II region spans residues 80–130 (SSATPAPSEPVAVTPSEPSPTTEVAEPSFASFNQAAPMLNQLPLGDPNRSS). Positions 131–347 (VLNPRYTFSS…GCLNRVIAYA (217 aa)) are domain III, AAA+ region. Residues G175, G177, K178, and T179 each coordinate ATP. Positions 348–472 (NLNRTPVTVE…RQRLYGENAR (125 aa)) are domain IV, binds dsDNA.

It belongs to the DnaA family. In terms of assembly, oligomerizes as a right-handed, spiral filament on DNA at oriC.

The protein localises to the cytoplasm. In terms of biological role, plays an essential role in the initiation and regulation of chromosomal replication. ATP-DnaA binds to the origin of replication (oriC) to initiate formation of the DNA replication initiation complex once per cell cycle. Binds the DnaA box (a 9 base pair repeat at the origin) and separates the double-stranded (ds)DNA. Forms a right-handed helical filament on oriC DNA; dsDNA binds to the exterior of the filament while single-stranded (ss)DNA is stabiized in the filament's interior. The ATP-DnaA-oriC complex binds and stabilizes one strand of the AT-rich DNA unwinding element (DUE), permitting loading of DNA polymerase. After initiation quickly degrades to an ADP-DnaA complex that is not apt for DNA replication. Binds acidic phospholipids. The sequence is that of Chromosomal replication initiator protein DnaA from Herpetosiphon aurantiacus (strain ATCC 23779 / DSM 785 / 114-95).